A 251-amino-acid chain; its full sequence is Hydroxyacylglutathione hydrolase (251 aa).

Zn(2+) contacts are provided by His-53, His-55, Asp-57, His-58, His-110, Asp-127, and His-165.

It belongs to the metallo-beta-lactamase superfamily. Glyoxalase II family. Monomer. Requires Zn(2+) as cofactor.

It catalyses the reaction an S-(2-hydroxyacyl)glutathione + H2O = a 2-hydroxy carboxylate + glutathione + H(+). Its pathway is secondary metabolite metabolism; methylglyoxal degradation; (R)-lactate from methylglyoxal: step 2/2. Functionally, thiolesterase that catalyzes the hydrolysis of S-D-lactoyl-glutathione to form glutathione and D-lactic acid. This is Hydroxyacylglutathione hydrolase from Serratia proteamaculans (strain 568).